The chain runs to 640 residues: Leucine-rich repeat-containing protein 4C (640 aa).

An N-terminal signal peptide occupies residues 1–44 (MLNKMTLHPQQIMIGPRFNRALFDPLLVVLLALQLLVVAGLVRA). Residues 45 to 76 (QTCPSVCSCSNQFSKVICVRKNLREVPDGIST) form the LRRNT domain. 9 LRR repeats span residues 77 to 98 (NTRL…SFKH), 101 to 122 (HLEI…AFNG), 125 to 146 (NLNT…AFVY), 149 to 170 (KLKE…AFNR), 173 to 195 (SLRR…AFEG), 198 to 219 (NLRY…TPLI), 220 to 241 (KLDE…SFQG), 244 to 265 (HLQK…AFDN), and 268 to 289 (SLVE…LFTP). Residues 301–353 (NPWNCNCDILWLSWWIKDMAPSNTACCARCNTPPNLKGRYIGELDQNYFTCYA) enclose the LRRCT domain. One can recognise an Ig-like C2-type domain in the interval 354-442 (PVIVEPPADL…GNTTASATLN (89 aa)). A disulfide bond links Cys-375 and Cys-426. The interval 463 to 483 (EPSQDEARTTDNNVGPTPVVD) is disordered. Residues 528-548 (IIIGCFVAITLMAAVMLVIFY) form a helical membrane-spanning segment. The residue at position 631 (Ser-631) is a Phosphoserine.

In terms of assembly, interacts with NTNG1 and WHRN. As to expression, highly expressed in the cerebral cortex, including frontal, parietal and occipital lobes. Putamen, amygdala, hippocampus and medulla oblongata show moderate expression. Caudate nucleus and thalamus express small amounts, whereas other brain regions show very weak or no expression.

It is found in the postsynaptic cell membrane. Functionally, may promote neurite outgrowth of developing thalamic neurons. This Homo sapiens (Human) protein is Leucine-rich repeat-containing protein 4C (LRRC4C).